A 129-amino-acid chain; its full sequence is uncharacterized protein (129 aa).

The disordered stretch occupies residues 1-129 (MWLWQDIQCC…HTSNGRTGDL (129 aa)). Residues 87-100 (KGADTRRLPRETRP) are compositionally biased toward basic and acidic residues. A compositionally biased stretch (polar residues) spans 119–129 (PHTSNGRTGDL).

This is an uncharacterized protein from Homo sapiens (Human).